Reading from the N-terminus, the 107-residue chain is U1-lycotoxin-Ls1b (107 aa).

An N-terminal signal peptide occupies residues 1-20 (MMKALVVVALLVTLISYSSS). A propeptide spanning residues 21–41 (EGIDDLEADELLSLMANEQTR) is cleaved from the precursor. 4 disulfides stabilise this stretch: cysteine 44/cysteine 59, cysteine 51/cysteine 68, cysteine 58/cysteine 86, and cysteine 70/cysteine 84.

It belongs to the neurotoxin 19 (CSTX) family. 04 (U1-Lctx) subfamily. Expressed by the venom gland.

It localises to the secreted. The sequence is that of U1-lycotoxin-Ls1b from Lycosa singoriensis (Wolf spider).